Reading from the N-terminus, the 188-residue chain is Ion-translocating oxidoreductase complex subunit B (188 aa).

The interval methionine 1–alanine 26 is hydrophobic. Residues glutamine 32 to leucine 90 enclose the 4Fe-4S domain. Positions 49, 52, 57, 73, 113, 116, 119, 123, 143, 146, 149, and 153 each coordinate [4Fe-4S] cluster. 4Fe-4S ferredoxin-type domains lie at arginine 104–arginine 133 and leucine 134–isoleucine 163.

Belongs to the 4Fe4S bacterial-type ferredoxin family. RnfB subfamily. The complex is composed of six subunits: RnfA, RnfB, RnfC, RnfD, RnfE and RnfG. It depends on [4Fe-4S] cluster as a cofactor.

It localises to the cell inner membrane. In terms of biological role, part of a membrane-bound complex that couples electron transfer with translocation of ions across the membrane. The protein is Ion-translocating oxidoreductase complex subunit B of Pseudomonas paraeruginosa (strain DSM 24068 / PA7) (Pseudomonas aeruginosa (strain PA7)).